Consider the following 346-residue polypeptide: S-adenosylmethionine:tRNA ribosyltransferase-isomerase (346 aa).

The protein belongs to the QueA family. As to quaternary structure, monomer.

The protein resides in the cytoplasm. It catalyses the reaction 7-aminomethyl-7-carbaguanosine(34) in tRNA + S-adenosyl-L-methionine = epoxyqueuosine(34) in tRNA + adenine + L-methionine + 2 H(+). Its pathway is tRNA modification; tRNA-queuosine biosynthesis. Its function is as follows. Transfers and isomerizes the ribose moiety from AdoMet to the 7-aminomethyl group of 7-deazaguanine (preQ1-tRNA) to give epoxyqueuosine (oQ-tRNA). The chain is S-adenosylmethionine:tRNA ribosyltransferase-isomerase from Shewanella frigidimarina (strain NCIMB 400).